Consider the following 322-residue polypeptide: Transcription factor WRKY45-2 (322 aa).

The segment at 67–110 (GGEGSEVQSEVTCGGGASAGGKRKAPAANRKANCRRRTQQSSGN) is disordered. The WRKY DNA-binding region spans 112–180 (VVVKNLDDGQ…YIGEHTCRDP (69 aa)). The disordered stretch occupies residues 256–284 (SDQEEVLSSLTPGSSAARGGGVAGPFGPD).

Belongs to the WRKY group III family. Expressed in aleurone cells.

Its subcellular location is the nucleus. Its function is as follows. Transcriptional activator involved in defense responses against pathogens. Acts as a positive regulator of defense responses against the rice blast fungus Magnaporthe oryzae. Acts as a positive regulator of defense responses against the bacterial blight Xanthomonas oryzae pv oryzae (Xoo) and the bacterial streak Xanthomonas oryzae pv oryzicola (Xoc). Acts as a positive regulator of abscisic acid (ABA) signaling that suppresses growth of seedlings. Acts as a negative regulator of salt stress response. Acts as a negative regulator of cold stress response. Acts as a negative regulator of drought stress response. This chain is Transcription factor WRKY45-2, found in Oryza sativa subsp. indica (Rice).